The primary structure comprises 245 residues: Ubiquinone biosynthesis O-methyltransferase (245 aa).

Positions 44, 64, 85, and 129 each coordinate S-adenosyl-L-methionine.

Belongs to the methyltransferase superfamily. UbiG/COQ3 family.

The catalysed reaction is a 3-demethylubiquinol + S-adenosyl-L-methionine = a ubiquinol + S-adenosyl-L-homocysteine + H(+). The enzyme catalyses a 3-(all-trans-polyprenyl)benzene-1,2-diol + S-adenosyl-L-methionine = a 2-methoxy-6-(all-trans-polyprenyl)phenol + S-adenosyl-L-homocysteine + H(+). Its pathway is cofactor biosynthesis; ubiquinone biosynthesis. Functionally, O-methyltransferase that catalyzes the 2 O-methylation steps in the ubiquinone biosynthetic pathway. The sequence is that of Ubiquinone biosynthesis O-methyltransferase from Proteus mirabilis (strain HI4320).